The chain runs to 247 residues: 2,3-bisphosphoglycerate-dependent phosphoglycerate mutase (247 aa).

Residues 8-15 (RHGESTWN), 21-22 (TG), Arg-60, 87-90 (ERHY), Lys-98, 114-115 (RR), and 183-184 (GN) contribute to the substrate site. His-9 acts as the Tele-phosphohistidine intermediate in catalysis. Glu-87 acts as the Proton donor/acceptor in catalysis.

It belongs to the phosphoglycerate mutase family. BPG-dependent PGAM subfamily. In terms of assembly, homodimer.

It carries out the reaction (2R)-2-phosphoglycerate = (2R)-3-phosphoglycerate. The protein operates within carbohydrate degradation; glycolysis; pyruvate from D-glyceraldehyde 3-phosphate: step 3/5. Catalyzes the interconversion of 2-phosphoglycerate and 3-phosphoglycerate. The polypeptide is 2,3-bisphosphoglycerate-dependent phosphoglycerate mutase (Acidovorax ebreus (strain TPSY) (Diaphorobacter sp. (strain TPSY))).